Here is a 142-residue protein sequence, read N- to C-terminus: Cytochrome c-type biogenesis protein CcmE (142 aa).

Residues 1–2 are Cytoplasmic-facing; sequence MK. A helical; Signal-anchor for type II membrane protein membrane pass occupies residues 3-23; that stretch reads GKYLLGILVILGALGYMVFGG. The Periplasmic portion of the chain corresponds to 24–142; it reads LGRNLVYFLT…EVRKLIEEAQ (119 aa). 2 residues coordinate heme: His-118 and Tyr-122.

This sequence belongs to the CcmE/CycJ family.

Its subcellular location is the cell inner membrane. Heme chaperone required for the biogenesis of c-type cytochromes. Transiently binds heme delivered by CcmC and transfers the heme to apo-cytochromes in a process facilitated by CcmF and CcmH. The sequence is that of Cytochrome c-type biogenesis protein CcmE from Thermus thermophilus (strain ATCC 27634 / DSM 579 / HB8).